We begin with the raw amino-acid sequence, 766 residues long: DENN domain-containing protein 1B (766 aa).

Residues 14–143 form the uDENN domain; the sequence is DLVLKVKCHA…YNHPVPKANT (130 aa). Residues 160 to 296 enclose the cDENN domain; sequence GLPTIPESRN…VVSALKNKLK (137 aa). Residues 298–375 form the dDENN domain; sequence QSTATGDGVA…DGRLAKLNAG (78 aa). The FXDXF motif motif lies at 378-382; it reads FSDIF. A disordered region spans residues 472 to 523; it reads NEKGENREKHKLSQTHLKRPHKSLDGTLYDDDDDDDDIERASKISSEDGEET. Residues 480-492 show a composition bias toward basic residues; that stretch reads KHKLSQTHLKRPH. Residues 499–509 show a composition bias toward acidic residues; that stretch reads LYDDDDDDDDI. A Phosphotyrosine modification is found at Y500. Phosphoserine occurs at positions 516, 517, 530, and 533. Positions 547-556 match the Clathrin box motif; sequence DLLGEILDTL. Disordered stretches follow at residues 611 to 634 and 652 to 732; these read LGQDDSALHGRQLPPSPRKRVSSG and LCAD…KPSK. 2 positions are modified to phosphoserine: S632 and S633. A compositionally biased stretch (polar residues) spans 694–704; that stretch reads TPGQAPLQSED. The segment covering 722 to 732 has biased composition (basic and acidic residues); sequence KAGKEDTKPSK.

In terms of assembly, interacts with RAB35. Interacts with clathrin heavy chain/CLTC. Interacts with components of the adapter protein complex 2 (AP-2) AP2A2 and AP2B1. Interacts with CD3E. Phosphorylated on serine and/or threonine, possibly regulating the guanine nucleotide exchange factor (GEF) activity. Expressed in a subset of dendritic cells (DCs).

The protein localises to the cytoplasm. The protein resides in the cytosol. Its subcellular location is the cytoplasmic vesicle. It localises to the clathrin-coated vesicle. In terms of biological role, guanine nucleotide exchange factor (GEF) for RAB35 that acts as a regulator of T-cell receptor (TCR) internalization in TH2 cells. Acts by promoting the exchange of GDP to GTP, converting inactive GDP-bound RAB35 into its active GTP-bound form. Plays a role in clathrin-mediated endocytosis. Controls cytokine production in TH2 lymphocytes by controlling the rate of TCR internalization and routing to endosomes: acts by mediating clathrin-mediated endocytosis of TCR via its interaction with the adapter protein complex 2 (AP-2) and GEF activity. Dysregulation leads to impaired TCR down-modulation and recycling, affecting cytokine production in TH2 cells. This Mus musculus (Mouse) protein is DENN domain-containing protein 1B.